Consider the following 391-residue polypeptide: Na(+)/H(+) antiporter NhaA (391 aa).

11 helical membrane passes run 14–34 (AGGI…NSPL), 47–67 (FGMS…FLLI), 87–107 (IFPA…YVAF), 117–137 (GWAI…ALLG), 146–166 (VFLL…IALF), 171–191 (LSTM…MLNA), 205–225 (AILW…GVVI), 252–272 (VAFG…LEGV), 280–300 (MLPL…IFTF), 318–338 (FIHI…SIFI), and 356–376 (LGIL…LHFS).

The protein belongs to the NhaA Na(+)/H(+) (TC 2.A.33) antiporter family.

It localises to the cell inner membrane. The catalysed reaction is Na(+)(in) + 2 H(+)(out) = Na(+)(out) + 2 H(+)(in). Functionally, na(+)/H(+) antiporter that extrudes sodium in exchange for external protons. This chain is Na(+)/H(+) antiporter NhaA, found in Vibrio campbellii (strain ATCC BAA-1116).